Consider the following 30-residue polypeptide: GLFKTLIKGAGKMLGHVAKEFLGSEGEPES.

In terms of tissue distribution, expressed by the skin glands.

The protein resides in the secreted. Its function is as follows. Has antimicrobial activity. The sequence is that of Dermaseptin-3.4TR from Phyllomedusa trinitatis (Trinidad leaf frog).